The sequence spans 238 residues: Ribonuclease PH (238 aa).

Residues R86 and 124–126 (GTR) contribute to the phosphate site.

Belongs to the RNase PH family. As to quaternary structure, homohexameric ring arranged as a trimer of dimers.

The catalysed reaction is tRNA(n+1) + phosphate = tRNA(n) + a ribonucleoside 5'-diphosphate. In terms of biological role, phosphorolytic 3'-5' exoribonuclease that plays an important role in tRNA 3'-end maturation. Removes nucleotide residues following the 3'-CCA terminus of tRNAs; can also add nucleotides to the ends of RNA molecules by using nucleoside diphosphates as substrates, but this may not be physiologically important. Probably plays a role in initiation of 16S rRNA degradation (leading to ribosome degradation) during starvation. This is Ribonuclease PH from Psychrobacter arcticus (strain DSM 17307 / VKM B-2377 / 273-4).